We begin with the raw amino-acid sequence, 231 residues long: Staphylococcal superantigen-like 7 (231 aa).

Positions 1-30 are cleaved as a signal peptide; that stretch reads MKLKTLAKATLALGLLTTGVITSEGQAVQA.

Belongs to the staphylococcal/streptococcal toxin family. In terms of assembly, interacts with host IgA and complement C5; these interactions inhibits complement activation.

It localises to the secreted. In terms of biological role, plays a role in the inhibition of host complement-mediated lysis and serum bactericidal activity by interacting with complement component C5. Affects all three pathways of complement activation and inhibits the cleavage of C5 by preventing its binding to C5 convertases. In turn, prevents C5a-mediated neutrophil migration. In Staphylococcus aureus (strain NCTC 8325 / PS 47), this protein is Staphylococcal superantigen-like 7.